A 1299-amino-acid polypeptide reads, in one-letter code: Tenascin-N (1299 aa).

The first 28 residues, methionine 1–leucine 28, serve as a signal peptide directing secretion. EGF-like domains follow at residues glutamate 167–glycine 198, tyrosine 199–serine 229, and glutamate 230–alanine 260. 9 disulfide bridges follow: cysteine 171/cysteine 181, cysteine 175/cysteine 186, cysteine 188/cysteine 197, cysteine 202/cysteine 212, cysteine 206/cysteine 217, cysteine 219/cysteine 228, cysteine 233/cysteine 243, cysteine 237/cysteine 248, and cysteine 250/cysteine 259. 9 consecutive Fibronectin type-III domains span residues threonine 264–alanine 352, valine 353–aspartate 444, serine 445–aspartate 532, serine 533–proline 623, lysine 624–aspartate 709, serine 710–proline 800, glutamine 801–aspartate 886, glycine 887–proline 976, and arginine 977–arginine 1063. A disordered region spans residues glycine 605–lysine 624. Residues glutamine 960–arginine 977 are compositionally biased toward basic and acidic residues. Positions glutamine 960–serine 982 are disordered. The 218-residue stretch at glycine 1061–glycine 1278 folds into the Fibrinogen C-terminal domain. A glycan (N-linked (GlcNAc...) asparagine) is linked at asparagine 1149.

Belongs to the tenascin family. In terms of assembly, homohexamer. As to expression, not detected in normal adult mammary tissues or brain but expressed in most breast tumors and brain tumors, such as glioblastomas, astrocytomas and oligodendrogliomas, tested. In brain tumors, detected around the endothelial cell layer of the clood vessels.

It is found in the secreted. It localises to the extracellular space. The protein resides in the extracellular matrix. In terms of biological role, extracellular matrix protein that seems to be a ligand for ITGA8:ITGB1, ITGAV:ITGB1 and ITGA4:ITGB1. Involved in neurite outgrowth and cell migration in hippocampal explants. During endochondral bone formation, inhibits proliferation and differentiation of proteoblasts mediated by canonical WNT signaling. In tumors, stimulates angiogenesis by elongation, migration and sprouting of endothelial cells. Expressed in most mammary tumors, may facilitate tumorigenesis by supporting the migratory behavior of breast cancer cells. This Homo sapiens (Human) protein is Tenascin-N.